The sequence spans 244 residues: Inactive chemokine-binding protein (244 aa).

The interval 1-79 is disordered; sequence MHVPASLQQS…STSVEDVDPP (79 aa). Positions 37–53 are enriched in polar residues; it reads QDQTPTNDKICQSVTEI. A compositionally biased stretch (acidic residues) spans 54–77; it reads TESESDPDPEVESEDDSTSVEDVD.

The protein belongs to the orthopoxvirus OPG001 family.

It is found in the host cytoplasm. Its function is as follows. The protein is truncated in this vaccinal strain and presumably inactive, because the lack of signal peptide prevents the protein of being secreted. In the other strains inhibits host immune defense by binding to host chemokines. Binds host CC chemokines (beta chemokines) such as RANTES with high affinity, but not CXC or C chemokines (alpha and gamma chemokines). In Vaccinia virus (strain Copenhagen) (VACV), this protein is Inactive chemokine-binding protein (OPG001).